A 430-amino-acid polypeptide reads, in one-letter code: Centrosomal protein CEP57L1 (430 aa).

Ser45 is modified (phosphoserine). Residues 46-213 are a coiled coil; it reads PNNQALVSAL…HQRRLFQDRA (168 aa). Disordered stretches follow at residues 248-290 and 362-430; these read CLKR…GEPF and RKLQ…KWEQ. Composition is skewed to basic and acidic residues over residues 249–272, 362–372, and 421–430; these read LKRE…ERPP, RKLQEKVENSR, and LRRDDVKWEQ. Residues 290 to 377 are a coiled coil; sequence FSICDNLSEL…VENSRINESS (88 aa).

The protein belongs to the translokin family.

It is found in the cytoplasm. The protein localises to the cytoskeleton. It localises to the microtubule organizing center. Its subcellular location is the centrosome. Functionally, centrosomal protein which may be required for microtubule attachment to centrosomes. The chain is Centrosomal protein CEP57L1 (Cep57l1) from Rattus norvegicus (Rat).